The following is a 387-amino-acid chain: Phosphoglycerate kinase (387 aa).

Substrate contacts are provided by residues 21-23 (DLN), Arg-36, 59-62 (HLGR), Arg-113, and Arg-146. Residues Lys-197, Glu-314, and 340 to 343 (GGDT) each bind ATP.

This sequence belongs to the phosphoglycerate kinase family. As to quaternary structure, monomer.

It localises to the cytoplasm. The catalysed reaction is (2R)-3-phosphoglycerate + ATP = (2R)-3-phospho-glyceroyl phosphate + ADP. It functions in the pathway carbohydrate degradation; glycolysis; pyruvate from D-glyceraldehyde 3-phosphate: step 2/5. The chain is Phosphoglycerate kinase from Pseudomonas putida (strain GB-1).